The chain runs to 321 residues: Lipoyl synthase (321 aa).

The [4Fe-4S] cluster site is built by C68, C73, C79, C94, C98, C101, and S308. In terms of domain architecture, Radical SAM core spans 80–297 (FNHGTATFMI…KQEALAMGFT (218 aa)).

This sequence belongs to the radical SAM superfamily. Lipoyl synthase family. It depends on [4Fe-4S] cluster as a cofactor.

The protein resides in the cytoplasm. The catalysed reaction is [[Fe-S] cluster scaffold protein carrying a second [4Fe-4S](2+) cluster] + N(6)-octanoyl-L-lysyl-[protein] + 2 oxidized [2Fe-2S]-[ferredoxin] + 2 S-adenosyl-L-methionine + 4 H(+) = [[Fe-S] cluster scaffold protein] + N(6)-[(R)-dihydrolipoyl]-L-lysyl-[protein] + 4 Fe(3+) + 2 hydrogen sulfide + 2 5'-deoxyadenosine + 2 L-methionine + 2 reduced [2Fe-2S]-[ferredoxin]. It participates in protein modification; protein lipoylation via endogenous pathway; protein N(6)-(lipoyl)lysine from octanoyl-[acyl-carrier-protein]: step 2/2. Catalyzes the radical-mediated insertion of two sulfur atoms into the C-6 and C-8 positions of the octanoyl moiety bound to the lipoyl domains of lipoate-dependent enzymes, thereby converting the octanoylated domains into lipoylated derivatives. The chain is Lipoyl synthase from Sodalis glossinidius (strain morsitans).